The sequence spans 328 residues: Cytochrome c biogenesis protein CcsA (328 aa).

8 helical membrane passes run 13–33 (ISFS…LVNL), 46–66 (GIII…IFSG), 73–93 (LYES…ISFF), 101–121 (LNAI…SGLL), 146–166 (MVLG…LLVI), 234–254 (IISL…VWAN), 263–283 (WDPK…YLHI), and 295–315 (AIVA…VNLL).

The protein belongs to the CcmF/CycK/Ccl1/NrfE/CcsA family. As to quaternary structure, may interact with Ccs1.

The protein localises to the plastid. It localises to the chloroplast thylakoid membrane. Functionally, required during biogenesis of c-type cytochromes (cytochrome c6 and cytochrome f) at the step of heme attachment. The protein is Cytochrome c biogenesis protein CcsA of Aethionema grandiflorum (Persian stone-cress).